The primary structure comprises 619 residues: Mitogen-activated protein kinase kinase kinase 2 (619 aa).

4 disordered regions span residues 25-44 (LSLQ…QNDV), 126-168 (QATN…PPPG), 201-245 (LDPL…DNHQ), and 289-355 (RTQG…APTN). Ser26 carries the post-translational modification Phosphoserine. In terms of domain architecture, PB1 spans 43–122 (DVRVKFEHRG…KSLKILLVVN (80 aa)). The segment covering 126-143 (QATNLEPSPSPEDLNNTP) has biased composition (polar residues). Phosphoserine is present on residues Ser153 and Ser164. Residues 203–219 (PLSLSSPENSGSGSCPS) are compositionally biased toward low complexity. Phosphoserine is present on residues Ser239, Ser297, Ser311, Ser331, Ser344, and Ser349. Positions 290-299 (TQGTSFRSPV) are enriched in polar residues. A compositionally biased stretch (low complexity) spans 300-315 (SFSPTDHSLSTSSGSS). The span at 322 to 332 (DDSRIRRRGSD) shows a compositional bias: basic and acidic residues. The segment covering 336 to 346 (PTLTVTDISPP) has biased composition (polar residues). The 261-residue stretch at 356 to 616 (WRLGKLLGQG…AEELLRHMFV (261 aa)) folds into the Protein kinase domain. Residues 362–370 (LGQGAFGRV) and Lys385 contribute to the ATP site. The Proton acceptor role is filled by Asp483.

This sequence belongs to the protein kinase superfamily. STE Ser/Thr protein kinase family. MAP kinase kinase kinase subfamily. As to quaternary structure, self-associates. Binds both upstream activators and downstream substrates in multimolecular complexes. Interacts (via the kinase catalytic domain) with STK38. Interacts with XIAP/BIRC4. Mg(2+) is required as a cofactor. Ubiquitination by XIAP/BIRC4 does not lead to proteasomal degradation. Post-translationally, autophosphorylated.

It localises to the cytoplasm. The protein resides in the nucleus. It carries out the reaction L-seryl-[protein] + ATP = O-phospho-L-seryl-[protein] + ADP + H(+). It catalyses the reaction L-threonyl-[protein] + ATP = O-phospho-L-threonyl-[protein] + ADP + H(+). Activated by phosphorylation on Thr-524. Interacts with PKN2; the interaction activates PKN2 kinase activity in a MAP3K2-independent kinase activity. Functionally, component of a protein kinase signal transduction cascade. Regulates the JNK and ERK5 pathways by phosphorylating and activating MAP2K5 and MAP2K7. Plays a role in caveolae kiss-and-run dynamics. This chain is Mitogen-activated protein kinase kinase kinase 2 (Map3k2), found in Mus musculus (Mouse).